The following is a 313-amino-acid chain: Aspartate carbamoyltransferase catalytic subunit (313 aa).

The carbamoyl phosphate site is built by arginine 58 and threonine 59. An L-aspartate-binding site is contributed by lysine 86. Carbamoyl phosphate is bound by residues arginine 108, histidine 136, and glutamine 139. Residues arginine 169 and arginine 223 each coordinate L-aspartate. Carbamoyl phosphate contacts are provided by glycine 264 and proline 265.

This sequence belongs to the aspartate/ornithine carbamoyltransferase superfamily. ATCase family. In terms of assembly, heterododecamer (2C3:3R2) of six catalytic PyrB chains organized as two trimers (C3), and six regulatory PyrI chains organized as three dimers (R2).

It carries out the reaction carbamoyl phosphate + L-aspartate = N-carbamoyl-L-aspartate + phosphate + H(+). It participates in pyrimidine metabolism; UMP biosynthesis via de novo pathway; (S)-dihydroorotate from bicarbonate: step 2/3. Catalyzes the condensation of carbamoyl phosphate and aspartate to form carbamoyl aspartate and inorganic phosphate, the committed step in the de novo pyrimidine nucleotide biosynthesis pathway. This chain is Aspartate carbamoyltransferase catalytic subunit, found in Halothermothrix orenii (strain H 168 / OCM 544 / DSM 9562).